Here is a 596-residue protein sequence, read N- to C-terminus: NADH-quinone oxidoreductase subunit C/D (596 aa).

The NADH dehydrogenase I subunit C stretch occupies residues 1-186 (MTDLTAQDAA…DPFELTKAKQ (186 aa)). Residues 210-596 (DFMFLNLGPN…IDFVMSDVDR (387 aa)) are NADH dehydrogenase I subunit D.

It in the N-terminal section; belongs to the complex I 30 kDa subunit family. The protein in the C-terminal section; belongs to the complex I 49 kDa subunit family. As to quaternary structure, NDH-1 is composed of 13 different subunits. Subunits NuoB, CD, E, F, and G constitute the peripheral sector of the complex.

It is found in the cell inner membrane. It catalyses the reaction a quinone + NADH + 5 H(+)(in) = a quinol + NAD(+) + 4 H(+)(out). Functionally, NDH-1 shuttles electrons from NADH, via FMN and iron-sulfur (Fe-S) centers, to quinones in the respiratory chain. The immediate electron acceptor for the enzyme in this species is believed to be ubiquinone. Couples the redox reaction to proton translocation (for every two electrons transferred, four hydrogen ions are translocated across the cytoplasmic membrane), and thus conserves the redox energy in a proton gradient. In Salmonella choleraesuis (strain SC-B67), this protein is NADH-quinone oxidoreductase subunit C/D.